Reading from the N-terminus, the 365-residue chain is Snurportin-1 (365 aa).

The IBB domain maps to 10–72; that stretch reads GGVALAAPNS…RLAEGDWAGV (63 aa). Disordered stretches follow at residues 15 to 34 and 69 to 90; these read AAPN…KGRG and WAGV…EMEV. Over residues 73–90 the composition is skewed to acidic residues; sequence ESDEDGGEDGDGEEEMEV. Positions 129 to 131 are interaction with m3G-cap structure; that stretch reads GKR. Residues 211–333 are necessary for binding to the m3G-cap structure; sequence LSSKIQEEEG…GKAQPSAEAA (123 aa). The disordered stretch occupies residues 317–365; it reads RSKKLAAGKAQPSAEAAARNGHYELEHLSTPQPANSAQGQEEAGSQMEN. Over residues 345-355 the composition is skewed to polar residues; it reads STPQPANSAQG.

This sequence belongs to the snurportin family.

Its subcellular location is the nucleus. The protein localises to the cytoplasm. Its function is as follows. Functions as an U snRNP-specific nuclear import adapter. Involved in the trimethylguanosine (m3G)-cap-dependent nuclear import of U snRNPs. Binds specifically to the terminal m3G-cap U snRNAs. This Gallus gallus (Chicken) protein is Snurportin-1 (SNUPN).